Consider the following 320-residue polypeptide: Lipoyl synthase (320 aa).

[4Fe-4S] cluster is bound by residues cysteine 67, cysteine 72, cysteine 78, cysteine 93, cysteine 97, cysteine 100, and serine 307. Positions 79 to 296 constitute a Radical SAM core domain; sequence FNHGTATFMI…RDKANEMGFE (218 aa).

The protein belongs to the radical SAM superfamily. Lipoyl synthase family. Requires [4Fe-4S] cluster as cofactor.

It localises to the cytoplasm. The enzyme catalyses [[Fe-S] cluster scaffold protein carrying a second [4Fe-4S](2+) cluster] + N(6)-octanoyl-L-lysyl-[protein] + 2 oxidized [2Fe-2S]-[ferredoxin] + 2 S-adenosyl-L-methionine + 4 H(+) = [[Fe-S] cluster scaffold protein] + N(6)-[(R)-dihydrolipoyl]-L-lysyl-[protein] + 4 Fe(3+) + 2 hydrogen sulfide + 2 5'-deoxyadenosine + 2 L-methionine + 2 reduced [2Fe-2S]-[ferredoxin]. It functions in the pathway protein modification; protein lipoylation via endogenous pathway; protein N(6)-(lipoyl)lysine from octanoyl-[acyl-carrier-protein]: step 2/2. Its function is as follows. Catalyzes the radical-mediated insertion of two sulfur atoms into the C-6 and C-8 positions of the octanoyl moiety bound to the lipoyl domains of lipoate-dependent enzymes, thereby converting the octanoylated domains into lipoylated derivatives. In Haemophilus influenzae (strain ATCC 51907 / DSM 11121 / KW20 / Rd), this protein is Lipoyl synthase.